A 269-amino-acid polypeptide reads, in one-letter code: Proenkephalin-A (269 aa).

Residues 1–24 (MAQFLRLCIWLLALGSCLLATVQA) form the signal peptide. Disulfide bonds link cysteine 26–cysteine 48, cysteine 30–cysteine 52, and cysteine 33–cysteine 65. The interval 165-191 (DNRAKDSHQQESTNNDEDSTSKRYGGF) is disordered. 2 propeptides span residues 198–209 (SPQLEDEAKELQ) and 219–229 (VGRPEWWMDYQ). Serine 253 carries the post-translational modification Phosphoserine.

It belongs to the opioid neuropeptide precursor family. Post-translationally, proenkephalin-A is cleaved by CTSL to generate Met-enkephalin. In terms of processing, processed and degraded by ACE. Probably cleaved by ACE. Post-translationally, processed by ACE to generate Met-enkephalin in the nucleus accumbens of the brain. In terms of processing, the N-terminal domain contains 6 conserved cysteines thought to be involved in disulfide bonding and/or processing. As to expression, expressed in brain, heart and testis.

The protein resides in the secreted. The protein localises to the cytoplasmic vesicle. It localises to the secretory vesicle. Its subcellular location is the chromaffin granule lumen. Its function is as follows. Neuropeptide that competes with and mimic the effects of opiate drugs. They play a role in a number of physiologic functions, including pain perception and responses to stress. Met-enkephalin-Arg-Phe neuropeptide acts as a strong ligand of Mu-type opioid receptor OPRM1. Met-enkephalin-Arg-Phe-binding to OPRM1 in the nucleus accumbens of the brain increases activation of OPRM1, leading to long-term synaptic depression of glutamate release. In terms of biological role, increases glutamate release in the striatum and decreases GABA concentration in the striatum. Functionally, increases glutamate release in the striatum. This is Proenkephalin-A (Penk) from Rattus norvegicus (Rat).